A 361-amino-acid chain; its full sequence is CRISPR system associated protein Cas8 (361 aa).

As to quaternary structure, monomer. Can form a Cascade complex with Csa5, Cas7, Cas5a, Cas3 and Cas3'.

Its function is as follows. CRISPR (clustered regularly interspaced short palindromic repeat) is an adaptive immune system that provides protection against mobile genetic elements (viruses, transposable elements and conjugative plasmids). CRISPR clusters contain sequences complementary to antecedent mobile elements and target invading nucleic acids. CRISPR clusters are transcribed and processed into CRISPR RNA (crRNA). This Thermoproteus tenax (strain ATCC 35583 / DSM 2078 / JCM 9277 / NBRC 100435 / Kra 1) protein is CRISPR system associated protein Cas8 (cas8a2).